The chain runs to 152 residues: Xanthine-guanine phosphoribosyltransferase (152 aa).

Residues 37-38, R69, and 88-96 contribute to the 5-phospho-alpha-D-ribose 1-diphosphate site; these read RG and DDLVDTGGT. Position 69 (R69) interacts with GMP. D89 contributes to the Mg(2+) binding site. Guanine is bound by residues D92 and I135. Xanthine is bound by residues D92 and I135. GMP is bound by residues 92–96 and 134–135; these read DTGGT and WI.

It belongs to the purine/pyrimidine phosphoribosyltransferase family. XGPT subfamily. As to quaternary structure, homotetramer. Mg(2+) serves as cofactor.

Its subcellular location is the cell inner membrane. It catalyses the reaction GMP + diphosphate = guanine + 5-phospho-alpha-D-ribose 1-diphosphate. It carries out the reaction XMP + diphosphate = xanthine + 5-phospho-alpha-D-ribose 1-diphosphate. The enzyme catalyses IMP + diphosphate = hypoxanthine + 5-phospho-alpha-D-ribose 1-diphosphate. It participates in purine metabolism; GMP biosynthesis via salvage pathway; GMP from guanine: step 1/1. The protein operates within purine metabolism; XMP biosynthesis via salvage pathway; XMP from xanthine: step 1/1. Functionally, purine salvage pathway enzyme that catalyzes the transfer of the ribosyl-5-phosphate group from 5-phospho-alpha-D-ribose 1-diphosphate (PRPP) to the N9 position of the 6-oxopurines guanine and xanthine to form the corresponding ribonucleotides GMP (guanosine 5'-monophosphate) and XMP (xanthosine 5'-monophosphate), with the release of PPi. To a lesser extent, also acts on hypoxanthine. In Escherichia coli O127:H6 (strain E2348/69 / EPEC), this protein is Xanthine-guanine phosphoribosyltransferase.